Reading from the N-terminus, the 215-residue chain is FGFR1 oncogene partner 2 homolog (215 aa).

Coiled coils occupy residues 5–104 (IEKA…MSKY) and 161–185 (KEQE…ITRE). Residues 194 to 215 (DASESTSLSALVTNSDLSLRKN) form a disordered region. Positions 197–215 (ESTSLSALVTNSDLSLRKN) are enriched in polar residues.

The protein belongs to the SIKE family.

The protein resides in the cytoplasm. May be involved in wound healing pathway. The protein is FGFR1 oncogene partner 2 homolog (FGFR1OP2) of Pongo abelii (Sumatran orangutan).